A 1005-amino-acid polypeptide reads, in one-letter code: Retinoblastoma-related protein (1005 aa).

Positions 404 to 605 (TPVSTAMTTA…EKGSSMYNSL (202 aa)) are domain A. Residues 404 to 853 (TPVSTAMTTA…NEIFIPSVKP (450 aa)) form a pocket region. The interval 606–722 (TIARPNLSNE…HPTRGETCAE (117 aa)) is spacer. Residues 723–853 (TAVNLFFSKI…NEIFIPSVKP (131 aa)) are domain B. Polar residues predominate over residues 863–873 (VPKNPNNQVSE). Residues 863 to 899 (VPKNPNNQVSETNKKDESGPCPCPGSPKVSSFPSLPD) are disordered.

This sequence belongs to the retinoblastoma protein (RB) family.

It is found in the nucleus. In terms of biological role, regulator of biological processes that recruits a histone deacetylase to control gene transcription. May play a role in the entry into mitosis, negatively regulating the cell proliferation. Formation of stable complexes with geminiviridae replication-associated proteins may create a cellular environment which favors viral DNA replication. The sequence is that of Retinoblastoma-related protein (RBR) from Pilosella piloselloides (Glaucous king-devil hawkweed).